The chain runs to 175 residues: MTRTPVGSARTRPKPRKLGPQRGKALQASSRLSESPALVKKRMPDACTLGRAGIGLPKMCLHMAVRHSKAQKTGPGILQQRQKPPAPRASGGPALLGKRRGCSEAGSASLEPLSSSRAAAGCLNQVPLSPFLAGPRNTRRLPAPERERIELAATLCLEGWPLRCLASKGKLHCVY.

2 disordered regions span residues 1 to 39 and 70 to 100; these read MTRTPVGSARTRPKPRKLGPQRGKALQASSRLSESPALV and AQKTGPGILQQRQKPPAPRASGGPALLGKRR.

This Homo sapiens (Human) protein is FOXL2 neighbor protein (FOXL2NB).